We begin with the raw amino-acid sequence, 291 residues long: 4-hydroxy-tetrahydrodipicolinate synthase (291 aa).

T44 contacts pyruvate. Y132 serves as the catalytic Proton donor/acceptor. Residue K160 is the Schiff-base intermediate with substrate of the active site. I202 is a pyruvate binding site.

This sequence belongs to the DapA family. As to quaternary structure, homotetramer; dimer of dimers.

It is found in the cytoplasm. It carries out the reaction L-aspartate 4-semialdehyde + pyruvate = (2S,4S)-4-hydroxy-2,3,4,5-tetrahydrodipicolinate + H2O + H(+). Its pathway is amino-acid biosynthesis; L-lysine biosynthesis via DAP pathway; (S)-tetrahydrodipicolinate from L-aspartate: step 3/4. Catalyzes the condensation of (S)-aspartate-beta-semialdehyde [(S)-ASA] and pyruvate to 4-hydroxy-tetrahydrodipicolinate (HTPA). This Thermodesulfovibrio yellowstonii (strain ATCC 51303 / DSM 11347 / YP87) protein is 4-hydroxy-tetrahydrodipicolinate synthase.